Here is a 606-residue protein sequence, read N- to C-terminus: Lysosomal cobalamin transporter ABCD4 (606 aa).

The ABC transmembrane type-1 domain occupies 39-332 (NALMFLTLLC…CFTQLIDLST (294 aa)). Helical transmembrane passes span 43–63 (FLTLLCLTLLEQFVIYQVGLI), 76–96 (LEGFKTLTFLAVMLIVLNSTL), 190–210 (IFGYFILGTVVNKTLMGPIVM), 279–299 (YLGSILSYVVIAIPIFSGVYG), and 314–334 (AFVCIYLISCFTQLIDLSTTL). In terms of domain architecture, ABC transporter spans 389 to 603 (LERVSISAPS…GGGRWELMRI (215 aa)). Residue 421–428 (GNTGTGKT) participates in ATP binding.

It belongs to the ABC transporter superfamily. ABCD family. Peroxisomal fatty acyl CoA transporter (TC 3.A.1.203) subfamily. In terms of assembly, homodimer or heterodimer. Interacts with LMBRD1; this interaction induces the translocation of ABCD4 from the ER to the lysosome membrane. Interacts with LMBRD1 and MMACHC; this interaction ensures the transport of cobalamin from the lysosome to the cytosol. In terms of tissue distribution, ubiquitous.

The protein resides in the endoplasmic reticulum membrane. It localises to the lysosome membrane. It catalyses the reaction an R-cob(III)alamin(out) + ATP + H2O = an R-cob(III)alamin(in) + ADP + phosphate + H(+). Lysosomal membrane protein that transports cobalamin (Vitamin B12) from the lysosomal lumen to the cytosol in an ATP-dependent manner. Targeted by LMBRD1 lysosomal chaperone from the endoplasmic reticulum to the lysosomal membrane. Then forms a complex with lysosomal chaperone LMBRD1 and cytosolic MMACHC to transport cobalamin across the lysosomal membrane. The chain is Lysosomal cobalamin transporter ABCD4 from Homo sapiens (Human).